Consider the following 406-residue polypeptide: Cysteine desulfurase (406 aa).

Residue K226 is modified to N6-(pyridoxal phosphate)lysine. C364 functions as the Cysteine persulfide intermediate in the catalytic mechanism.

This sequence belongs to the class-V pyridoxal-phosphate-dependent aminotransferase family. Csd subfamily. Homodimer. Interacts with SufE and the SufBCD complex composed of SufB, SufC and SufD. The interaction with SufE is required to mediate the direct transfer of the sulfur atom from the S-sulfanylcysteine. It depends on pyridoxal 5'-phosphate as a cofactor.

It localises to the cytoplasm. The enzyme catalyses (sulfur carrier)-H + L-cysteine = (sulfur carrier)-SH + L-alanine. The catalysed reaction is L-selenocysteine + AH2 = hydrogenselenide + L-alanine + A + H(+). It participates in cofactor biosynthesis; iron-sulfur cluster biosynthesis. In terms of biological role, cysteine desulfurases mobilize the sulfur from L-cysteine to yield L-alanine, an essential step in sulfur metabolism for biosynthesis of a variety of sulfur-containing biomolecules. Component of the suf operon, which is activated and required under specific conditions such as oxidative stress and iron limitation. Acts as a potent selenocysteine lyase in vitro, that mobilizes selenium from L-selenocysteine. Selenocysteine lyase activity is however unsure in vivo. This Enterobacter sp. (strain 638) protein is Cysteine desulfurase.